The sequence spans 413 residues: Putative F-box protein At3g23970 (413 aa).

The F-box domain maps to 1-42; that stretch reads MNIPPELTFEVLVRLPLKSLARFRSVRKEWKLVIDSEFFRDC.

This Arabidopsis thaliana (Mouse-ear cress) protein is Putative F-box protein At3g23970.